Consider the following 177-residue polypeptide: Large ribosomal subunit protein uL10 (177 aa).

This sequence belongs to the universal ribosomal protein uL10 family. As to quaternary structure, part of the ribosomal stalk of the 50S ribosomal subunit. The N-terminus interacts with L11 and the large rRNA to form the base of the stalk. The C-terminus forms an elongated spine to which L12 dimers bind in a sequential fashion forming a multimeric L10(L12)X complex.

Functionally, forms part of the ribosomal stalk, playing a central role in the interaction of the ribosome with GTP-bound translation factors. The protein is Large ribosomal subunit protein uL10 of Leptospira borgpetersenii serovar Hardjo-bovis (strain JB197).